Here is a 94-residue protein sequence, read N- to C-terminus: MSISKEEVIKIAKLSRLELKEDEVEFFSAQIKNILEFVNKLNEVKAELLEEEYSDSTPLRKDEPETSLEVDKVLLNAPAKRLNMFEVPKIVDAN.

Belongs to the GatC family. In terms of assembly, heterotrimer of A, B and C subunits.

It carries out the reaction L-glutamyl-tRNA(Gln) + L-glutamine + ATP + H2O = L-glutaminyl-tRNA(Gln) + L-glutamate + ADP + phosphate + H(+). The enzyme catalyses L-aspartyl-tRNA(Asn) + L-glutamine + ATP + H2O = L-asparaginyl-tRNA(Asn) + L-glutamate + ADP + phosphate + 2 H(+). Allows the formation of correctly charged Asn-tRNA(Asn) or Gln-tRNA(Gln) through the transamidation of misacylated Asp-tRNA(Asn) or Glu-tRNA(Gln) in organisms which lack either or both of asparaginyl-tRNA or glutaminyl-tRNA synthetases. The reaction takes place in the presence of glutamine and ATP through an activated phospho-Asp-tRNA(Asn) or phospho-Glu-tRNA(Gln). This is Aspartyl/glutamyl-tRNA(Asn/Gln) amidotransferase subunit C from Hydrogenobaculum sp. (strain Y04AAS1).